We begin with the raw amino-acid sequence, 247 residues long: UPF0280 protein MmarC6_1437 (247 aa).

The protein belongs to the UPF0280 family.

The sequence is that of UPF0280 protein MmarC6_1437 from Methanococcus maripaludis (strain C6 / ATCC BAA-1332).